Here is a 288-residue protein sequence, read N- to C-terminus: Very-long-chain (3R)-3-hydroxyacyl-CoA dehydratase 1 (288 aa).

The segment at 1 to 59 is disordered; sequence MGRLTEAAAAGGGASAARSAGPPPAPLPLSSTSPGCAAAMASSEEDGTNGGASEASDER. The Cytoplasmic segment spans residues 1 to 75; sequence MGRLTEAAAA…RRLGLLATIW (75 aa). Residues 76-95 form a helical membrane-spanning segment; the sequence is LTFYNIAMTAGWLVLAIAMV. The Lumenal segment spans residues 96 to 114; the sequence is RFYMEKGTHKGLYKSIQKT. Residues 115-131 traverse the membrane as a helical segment; that stretch reads LKFFQTFALLEIVHCLI. Residues 132–141 lie on the Cytoplasmic side of the membrane; that stretch reads GIVPTSVLVA. The helical transmembrane segment at 142 to 159 threads the bilayer; sequence GVQVSSRIFMVWLVTHSI. Over 160 to 165 the chain is Lumenal; the sequence is KPIQNE. A helical transmembrane segment spans residues 166–180; it reads ESVVLFLVAWTVTEI. Residues 181-203 lie on the Cytoplasmic side of the membrane; the sequence is TRYSFYTFSLLDHLPYFIKWARY. The chain crosses the membrane as a helical span at residues 204–221; that stretch reads NFFIILYPVGVAGELLTI. Catalysis depends on residues Tyr-210 and Glu-217. At 222–251 the chain is on the lumenal side; that stretch reads YAALPYVKKTGMFSIRLPNKYNVSFDYYYF. Residue Asn-243 is glycosylated (N-linked (GlcNAc...) asparagine). A helical membrane pass occupies residues 252–269; it reads LLITMASYIPLFPQLYFH. Over 270-288 the chain is Cytoplasmic; the sequence is MLRQRRKVLHGEVIVEKDD.

The protein belongs to the very long-chain fatty acids dehydratase HACD family. As to quaternary structure, may interact with enzymes of the ELO family (including ELOVL1); with those enzymes that mediate condensation, the first of the four steps of the reaction cycle responsible for fatty acids elongation, may be part of a larger fatty acids elongase complex. Interacts with TECR. Post-translationally, N-glycosylated. As to expression, expressed in heart.

It localises to the endoplasmic reticulum membrane. It catalyses the reaction a very-long-chain (3R)-3-hydroxyacyl-CoA = a very-long-chain (2E)-enoyl-CoA + H2O. The enzyme catalyses (3R)-hydroxyhexadecanoyl-CoA = (2E)-hexadecenoyl-CoA + H2O. It carries out the reaction (3R)-hydroxyoctadecanoyl-CoA = (2E)-octadecenoyl-CoA + H2O. The catalysed reaction is (3R)-hydroxyeicosanoyl-CoA = (2E)-eicosenoyl-CoA + H2O. It catalyses the reaction (3R)-hydroxydocosanoyl-CoA = (2E)-docosenoyl-CoA + H2O. The enzyme catalyses (3R)-hydroxytetracosanoyl-CoA = (2E)-tetracosenoyl-CoA + H2O. It carries out the reaction (3R)-hydroxyhexacosanoyl-CoA = (2E)-hexacosenoyl-CoA + H2O. Its pathway is lipid metabolism; fatty acid biosynthesis. Its function is as follows. Catalyzes the third of the four reactions of the long-chain fatty acids elongation cycle. This endoplasmic reticulum-bound enzymatic process, allows the addition of two carbons to the chain of long- and very long-chain fatty acids/VLCFAs per cycle. This enzyme catalyzes the dehydration of the 3-hydroxyacyl-CoA intermediate into trans-2,3-enoyl-CoA, within each cycle of fatty acid elongation. Thereby, it participates in the production of VLCFAs of different chain lengths that are involved in multiple biological processes as precursors of membrane lipids and lipid mediators. The sequence is that of Very-long-chain (3R)-3-hydroxyacyl-CoA dehydratase 1 (HACD1) from Ovis aries (Sheep).